The chain runs to 373 residues: Ubiquitin carboxyl-terminal hydrolase 50 (373 aa).

Residues 44-364 (TGLRNLGNTC…TAYLLFYSCQ (321 aa)) form the USP domain. C53 (nucleophile) is an active-site residue. H322 serves as the catalytic Proton acceptor.

It belongs to the peptidase C19 family.

The protein resides in the cytoplasm. It localises to the cytoskeleton. The protein localises to the microtubule organizing center. It is found in the centrosome. Its subcellular location is the nucleus. The catalysed reaction is Thiol-dependent hydrolysis of ester, thioester, amide, peptide and isopeptide bonds formed by the C-terminal Gly of ubiquitin (a 76-residue protein attached to proteins as an intracellular targeting signal).. In terms of biological role, deubiquitinating enzyme that removes conjugated ubiquitin from specific proteins to regulate different cellular processes. Regulates the inflammasome signaling pathway by deubiquitinating 'Lys-63'-linked polyubiquitination of the PYCARD/ASC adapter protein. Regulates the ubiquitination and stability of the ACE2 protein. Acts as a negative regulator of the G2/M checkpoint pathway, by preventing serine/threonine kinase WEE1 degradation, thereby repressing entry into mitosis following activation of the G2/M DNA damage checkpoint. The chain is Ubiquitin carboxyl-terminal hydrolase 50 (USP50) from Macaca fascicularis (Crab-eating macaque).